A 205-amino-acid polypeptide reads, in one-letter code: Large ribosomal subunit protein uL4 (205 aa).

Residues Arg43–Asn95 are disordered. The segment covering Ala48–His57 has biased composition (basic and acidic residues). Basic residues predominate over residues Ser58–Gly69.

This sequence belongs to the universal ribosomal protein uL4 family. Part of the 50S ribosomal subunit.

One of the primary rRNA binding proteins, this protein initially binds near the 5'-end of the 23S rRNA. It is important during the early stages of 50S assembly. It makes multiple contacts with different domains of the 23S rRNA in the assembled 50S subunit and ribosome. In terms of biological role, forms part of the polypeptide exit tunnel. The protein is Large ribosomal subunit protein uL4 of Bordetella pertussis (strain Tohama I / ATCC BAA-589 / NCTC 13251).